A 301-amino-acid polypeptide reads, in one-letter code: 4-hydroxy-tetrahydrodipicolinate synthase (301 aa).

Thr-57 serves as a coordination point for pyruvate. Tyr-145 serves as the catalytic Proton donor/acceptor. Lys-173 serves as the catalytic Schiff-base intermediate with substrate. Residue Ile-213 coordinates pyruvate.

It belongs to the DapA family. Homotetramer; dimer of dimers.

The protein localises to the cytoplasm. It catalyses the reaction L-aspartate 4-semialdehyde + pyruvate = (2S,4S)-4-hydroxy-2,3,4,5-tetrahydrodipicolinate + H2O + H(+). The protein operates within amino-acid biosynthesis; L-lysine biosynthesis via DAP pathway; (S)-tetrahydrodipicolinate from L-aspartate: step 3/4. Its function is as follows. Catalyzes the condensation of (S)-aspartate-beta-semialdehyde [(S)-ASA] and pyruvate to 4-hydroxy-tetrahydrodipicolinate (HTPA). This chain is 4-hydroxy-tetrahydrodipicolinate synthase, found in Corynebacterium diphtheriae (strain ATCC 700971 / NCTC 13129 / Biotype gravis).